We begin with the raw amino-acid sequence, 430 residues long: Mitochondrial distribution and morphology protein 10 (430 aa).

Over residues 215-234 the composition is skewed to polar residues; that stretch reads SSSAMNPPSGTSASETNGSG. Disordered regions lie at residues 215-237 and 339-393; these read SSSA…GPSV and LGAN…GPKE.

Belongs to the MDM10 family. In terms of assembly, component of the ER-mitochondria encounter structure (ERMES) or MDM complex, composed of MMM1, MDM10, MDM12 and MDM34. Associates with the mitochondrial outer membrane sorting assembly machinery SAM(core) complex.

The protein localises to the mitochondrion outer membrane. Its function is as follows. Component of the ERMES/MDM complex, which serves as a molecular tether to connect the endoplasmic reticulum and mitochondria. Components of this complex are involved in the control of mitochondrial shape and protein biogenesis and may function in phospholipid exchange. MDM10 is involved in the late assembly steps of the general translocase of the mitochondrial outer membrane (TOM complex). Functions in the TOM40-specific route of the assembly of outer membrane beta-barrel proteins, including the association of TOM40 with the receptor TOM22 and small TOM proteins. Can associate with the SAM(core) complex as well as the MDM12-MMM1 complex, both involved in late steps of the major beta-barrel assembly pathway, that is responsible for biogenesis of all outer membrane beta-barrel proteins. May act as a switch that shuttles between both complexes and channels precursor proteins into the TOM40-specific pathway. Plays a role in mitochondrial morphology and in the inheritance of mitochondria. In Chaetomium globosum (strain ATCC 6205 / CBS 148.51 / DSM 1962 / NBRC 6347 / NRRL 1970) (Soil fungus), this protein is Mitochondrial distribution and morphology protein 10.